A 61-amino-acid polypeptide reads, in one-letter code: Small ribosomal subunit protein uS14 (61 aa).

Positions 24, 27, 40, and 43 each coordinate Zn(2+).

Belongs to the universal ribosomal protein uS14 family. Zinc-binding uS14 subfamily. In terms of assembly, part of the 30S ribosomal subunit. Contacts proteins S3 and S10. Zn(2+) serves as cofactor.

Functionally, binds 16S rRNA, required for the assembly of 30S particles and may also be responsible for determining the conformation of the 16S rRNA at the A site. The polypeptide is Small ribosomal subunit protein uS14 (Frankia alni (strain DSM 45986 / CECT 9034 / ACN14a)).